The chain runs to 279 residues: Lacto-N-neotetraose biosynthesis glycosyltransferase LgtB (279 aa).

The protein belongs to the glycosyltransferase 25 family.

The protein operates within glycan metabolism; lacto-N-neotetraose biosynthesis. It participates in bacterial outer membrane biogenesis; lipooligosaccharide biosynthesis. In terms of biological role, adds the second galactose to the lacto-N-tetraose chain in lipooligosaccharide (LOS). This chain is Lacto-N-neotetraose biosynthesis glycosyltransferase LgtB (lgtB), found in Neisseria meningitidis serogroup A / serotype 4A (strain DSM 15465 / Z2491).